A 31-amino-acid polypeptide reads, in one-letter code: Glucagon-5 (31 aa).

Belongs to the glucagon family.

It is found in the secreted. Its function is as follows. Glucagon plays a key role in glucose metabolism and homeostasis. Regulates blood glucose by increasing gluconeogenesis and decreasing glycolysis. The protein is Glucagon-5 of Huso dauricus (Kaluga sturgeon).